The following is a 518-amino-acid chain: Glutamate--cysteine ligase (518 aa).

It belongs to the glutamate--cysteine ligase type 1 family. Type 1 subfamily.

The enzyme catalyses L-cysteine + L-glutamate + ATP = gamma-L-glutamyl-L-cysteine + ADP + phosphate + H(+). The protein operates within sulfur metabolism; glutathione biosynthesis; glutathione from L-cysteine and L-glutamate: step 1/2. This Salmonella paratyphi C (strain RKS4594) protein is Glutamate--cysteine ligase.